Consider the following 465-residue polypeptide: Sensor histidine kinase ZraS (465 aa).

At 1 to 14 (MSFIRLHKDAAAMW) the chain is on the cytoplasmic side. A helical membrane pass occupies residues 15–35 (LSRLLPAAIFILVGLFSIMVI). Topologically, residues 36–203 (RDYGRESAAA…ATQAREWRNT (168 aa)) are periplasmic. A helical membrane pass occupies residues 204–224 (LIVLSALAAVLLATLLAFFWY). Residues 225-465 (QRYQRSHREL…WLPVIARQQD (241 aa)) are Cytoplasmic-facing. One can recognise a Histidine kinase domain in the interval 253 to 461 (GVAHEIRNPL…VFTIWLPVIA (209 aa)). A Phosphohistidine; by autocatalysis modification is found at histidine 256.

Post-translationally, autophosphorylated.

Its subcellular location is the cell inner membrane. It carries out the reaction ATP + protein L-histidine = ADP + protein N-phospho-L-histidine.. With respect to regulation, activity of the ZraS/ZraR two-component system is repressed by the zinc-bound form of ZraP, which probably interacts with the periplasmic region of ZraS. In terms of biological role, part of the Zra signaling pathway, an envelope stress response (ESR) system composed of the periplasmic accessory protein ZraP, the histidine kinase ZraS and the transcriptional regulator ZraR. The ZraPSR system contributes to antibiotic resistance and is important for membrane integrity in the presence of membrane-targeting biocides. ZraS is a member of the two-component regulatory system ZraS/ZraR. Functions as a membrane-associated sensor kinase that phosphorylates ZraR in response to high concentrations of Zn(2+) or Pb(2+) in the medium. The sequence is that of Sensor histidine kinase ZraS (zraS) from Salmonella typhi.